Consider the following 362-residue polypeptide: Aminomethyltransferase (362 aa).

It belongs to the GcvT family. As to quaternary structure, the glycine cleavage system is composed of four proteins: P, T, L and H.

It carries out the reaction N(6)-[(R)-S(8)-aminomethyldihydrolipoyl]-L-lysyl-[protein] + (6S)-5,6,7,8-tetrahydrofolate = N(6)-[(R)-dihydrolipoyl]-L-lysyl-[protein] + (6R)-5,10-methylene-5,6,7,8-tetrahydrofolate + NH4(+). In terms of biological role, the glycine cleavage system catalyzes the degradation of glycine. The sequence is that of Aminomethyltransferase from Listeria welshimeri serovar 6b (strain ATCC 35897 / DSM 20650 / CCUG 15529 / CIP 8149 / NCTC 11857 / SLCC 5334 / V8).